Here is a 536-residue protein sequence, read N- to C-terminus: Phosphoenolpyruvate carboxykinase (ATP) (536 aa).

R61, Y195, and K201 together coordinate substrate. ATP-binding positions include K201, H220, and 236–244 (GLSGTGKTT). Residues K201 and H220 each coordinate Mn(2+). A Mn(2+)-binding site is contributed by D257. Positions 285, 322, and 447 each coordinate ATP. R322 contributes to the substrate binding site.

Belongs to the phosphoenolpyruvate carboxykinase (ATP) family. The cofactor is Mn(2+).

The protein localises to the cytoplasm. It carries out the reaction oxaloacetate + ATP = phosphoenolpyruvate + ADP + CO2. Its pathway is carbohydrate biosynthesis; gluconeogenesis. Its function is as follows. Involved in the gluconeogenesis. Catalyzes the conversion of oxaloacetate (OAA) to phosphoenolpyruvate (PEP) through direct phosphoryl transfer between the nucleoside triphosphate and OAA. The protein is Phosphoenolpyruvate carboxykinase (ATP) of Brucella suis biovar 1 (strain 1330).